Reading from the N-terminus, the 62-residue chain is [Ser6, Val10, Asp11]-phyllokinin (62 aa).

An N-terminal signal peptide occupies residues 1–22 (MSFLKKSLLLVLFLGLVSFSIC). A propeptide spanning residues 23 to 51 (EEEKRETEEEENEDDMDEESEEKKRESPD) is cleaved from the precursor. The disordered stretch occupies residues 24 to 62 (EEKRETEEEENEDDMDEESEEKKRESPDRPPGFSPFRVD). The segment covering 30–42 (EEEENEDDMDEES) has biased composition (acidic residues).

The protein belongs to the frog skin active peptide (FSAP) family. Bradykinin-related peptide subfamily. As to expression, expressed by the skin glands.

Its subcellular location is the secreted. In terms of biological role, induces relaxation of rat smooth muscle from tail artery and contraction of that from ileum, urinary bladder and uterus. Binds to both bradykinin receptor B1 (BDKRB1) and B2 (BDKRB2). This chain is [Ser6, Val10, Asp11]-phyllokinin, found in Agalychnis spurrelli (Gliding leaf frog).